Consider the following 319-residue polypeptide: Meiotic drive suppressor wtf16 (319 aa).

2 disordered regions span residues 1–22 (MKNNYTSLKSPIDEGDESKTGH) and 35–68 (DSEEEGALPPYSDHARVSNSPNTHRENNPSRSTD). 6 helical membrane-spanning segments follow: residues 73–93 (FLIKLLISFTPIYVLNVLAIC), 110–130 (WTLFGFWCLVCTLALIFLTYF), 153–173 (VVIIWLLWVVICFVLFGCIKF), 187–207 (CSISAALLLFLLYVRLPFWTL), 215–235 (FQVLGVQSCVVIVTKGLMYLF), and 241–261 (ATGYEIEATSLFVIGNFFFFY).

The protein belongs to the WTF family. As to quaternary structure, homomer. Interacts with other proteins that exhibit high sequence similarity.

The protein resides in the spore membrane. The protein localises to the vacuole membrane. Functionally, acts as a suppressor component of the dual wtf meiotic drive system, and can suppress but not confer meiotic drive by compatible poisons. Wtf meiotic drive systems promote unequal transmission of alleles from the parental zygote to progeny spores by encoding a poison and an antidote from the same locus; the poison is trans-acting and forms toxic aggregates in all spores within an ascus, wherease the antidote is spore-specific and targets aggregates for degradation by the vacuole. Meiotic drive by wtf systems therefore lead to poisoning of all progeny that do not inherit the dual poison/antidote allele, or express a compatible antidote. This chain is Meiotic drive suppressor wtf16, found in Schizosaccharomyces pombe (strain 972 / ATCC 24843) (Fission yeast).